Consider the following 550-residue polypeptide: Formate--tetrahydrofolate ligase (550 aa).

62–69 lines the ATP pocket; that stretch reads TPAGEGKS.

The protein belongs to the formate--tetrahydrofolate ligase family.

It carries out the reaction (6S)-5,6,7,8-tetrahydrofolate + formate + ATP = (6R)-10-formyltetrahydrofolate + ADP + phosphate. It participates in one-carbon metabolism; tetrahydrofolate interconversion. This Corynebacterium diphtheriae (strain ATCC 700971 / NCTC 13129 / Biotype gravis) protein is Formate--tetrahydrofolate ligase.